Here is a 337-residue protein sequence, read N- to C-terminus: Ferredoxin--NADP reductase (337 aa).

FAD contacts are provided by Glu42, Gln50, Tyr55, Val97, Phe130, Asp292, and Thr333.

This sequence belongs to the ferredoxin--NADP reductase type 2 family. In terms of assembly, homodimer. FAD is required as a cofactor.

The enzyme catalyses 2 reduced [2Fe-2S]-[ferredoxin] + NADP(+) + H(+) = 2 oxidized [2Fe-2S]-[ferredoxin] + NADPH. This is Ferredoxin--NADP reductase from Streptococcus mutans serotype c (strain ATCC 700610 / UA159).